The following is a 337-amino-acid chain: tRNA N6-adenosine threonylcarbamoyltransferase (337 aa).

Fe cation is bound by residues His-111 and His-115. Substrate-binding positions include 134–138, Asp-167, Gly-180, and Asn-272; that span reads LVSGG. Asp-300 contributes to the Fe cation binding site.

The protein belongs to the KAE1 / TsaD family. The cofactor is Fe(2+).

Its subcellular location is the cytoplasm. It catalyses the reaction L-threonylcarbamoyladenylate + adenosine(37) in tRNA = N(6)-L-threonylcarbamoyladenosine(37) in tRNA + AMP + H(+). Functionally, required for the formation of a threonylcarbamoyl group on adenosine at position 37 (t(6)A37) in tRNAs that read codons beginning with adenine. Is involved in the transfer of the threonylcarbamoyl moiety of threonylcarbamoyl-AMP (TC-AMP) to the N6 group of A37, together with TsaE and TsaB. TsaD likely plays a direct catalytic role in this reaction. This Aeromonas hydrophila subsp. hydrophila (strain ATCC 7966 / DSM 30187 / BCRC 13018 / CCUG 14551 / JCM 1027 / KCTC 2358 / NCIMB 9240 / NCTC 8049) protein is tRNA N6-adenosine threonylcarbamoyltransferase.